Consider the following 176-residue polypeptide: Large ribosomal subunit protein uL6 (176 aa).

It belongs to the universal ribosomal protein uL6 family. In terms of assembly, part of the 50S ribosomal subunit.

In terms of biological role, this protein binds to the 23S rRNA, and is important in its secondary structure. It is located near the subunit interface in the base of the L7/L12 stalk, and near the tRNA binding site of the peptidyltransferase center. The sequence is that of Large ribosomal subunit protein uL6 from Burkholderia vietnamiensis (strain G4 / LMG 22486) (Burkholderia cepacia (strain R1808)).